A 416-amino-acid polypeptide reads, in one-letter code: Protein MID1-COMPLEMENTING ACTIVITY 2 (416 aa).

A coiled-coil region spans residues 191–219; that stretch reads CEALKTEEEKLQLELQRSRARYDADQCEV. A helical transmembrane segment spans residues 338–354; that stretch reads LIVYSLILSCCCYTCCI.

As to expression, expressed in roots, leaves, stems, flowers and siliques. In the root, high levels of expression in vascular tissues, in the stele and endodermis, but no expression in the cortex, epidermis, root cap, promeristem and adjacent elongation zone of the primary root. Not expressed in root hairs. Detected in shoot apical meristem, leaf mesophyll cells and vascular tissues, upper half of inflorescence, but not in petioles of rosette leaves.

Its subcellular location is the cell membrane. With respect to regulation, inhibited by GdCl(3), but not by verapamil. Calcium-permeable stretch-activated channel component. Probably involved in mechanosensing and in mechano-stimulated calcium uptake mechanism. In Arabidopsis thaliana (Mouse-ear cress), this protein is Protein MID1-COMPLEMENTING ACTIVITY 2 (MCA2).